The following is a 241-amino-acid chain: 1-(5-phosphoribosyl)-5-[(5-phosphoribosylamino)methylideneamino] imidazole-4-carboxamide isomerase (241 aa).

Catalysis depends on aspartate 10, which acts as the Proton acceptor. Catalysis depends on aspartate 131, which acts as the Proton donor.

Belongs to the HisA/HisF family.

It localises to the cytoplasm. It catalyses the reaction 1-(5-phospho-beta-D-ribosyl)-5-[(5-phospho-beta-D-ribosylamino)methylideneamino]imidazole-4-carboxamide = 5-[(5-phospho-1-deoxy-D-ribulos-1-ylimino)methylamino]-1-(5-phospho-beta-D-ribosyl)imidazole-4-carboxamide. It participates in amino-acid biosynthesis; L-histidine biosynthesis; L-histidine from 5-phospho-alpha-D-ribose 1-diphosphate: step 4/9. The protein is 1-(5-phosphoribosyl)-5-[(5-phosphoribosylamino)methylideneamino] imidazole-4-carboxamide isomerase of Bifidobacterium longum (strain NCC 2705).